The chain runs to 256 residues: MGRGRVQLKRIENKINRQVTFSKRRAGLFKKAHEISVLCDAEVALVVFSHKGKLFEYSTDPCMEKILERYERYSYAERQLIAPESDVNTNWSMEYNRLKAKIELLERNQRHYLGEDLQAMSPKELQNLEQQLDTALKHIRSRKNQLMYESINELQRKEKAIQEQNSMLSKQIKERENVLRAQQEQWDEQNHGHNMPPPPPPQQHQIQHPYMLSHQPSPFLNMGGLYQEEDQMAMRRNDLDLSLEPVYNCNLGSFAA.

The MADS-box domain maps to 1–61 (MGRGRVQLKR…GKLFEYSTDP (61 aa)). A K-box domain is found at 88–178 (NTNWSMEYNR…SKQIKERENV (91 aa)). The disordered stretch occupies residues 187–206 (DEQNHGHNMPPPPPPQQHQI).

In terms of assembly, homodimer capable of binding to CArG-box sequences.

It localises to the nucleus. Its function is as follows. Transcription factor that promotes early floral meristem identity in synergy with LEAFY. Displays a redundant function with CAULIFLOWER in the up-regulation of LEAFY. Required subsequently for the transition of an inflorescence meristem into a floral meristem, and for the normal development of sepals and petals in flowers. Regulates positively B class homeotic proteins. The sequence is that of Floral homeotic protein APETALA 1 (AP1) from Brassica oleracea (Wild cabbage).